We begin with the raw amino-acid sequence, 236 residues long: Phosphoribosylformylglycinamidine synthase subunit PurQ (236 aa).

The Glutamine amidotransferase type-1 domain occupies 3 to 234; that stretch reads FGVIVFPGSN…VDWWERGERL (232 aa). Cys-86 functions as the Nucleophile in the catalytic mechanism. Residues His-203 and Glu-205 contribute to the active site.

As to quaternary structure, part of the FGAM synthase complex composed of 1 PurL, 1 PurQ and 2 PurS subunits.

The protein resides in the cytoplasm. It carries out the reaction N(2)-formyl-N(1)-(5-phospho-beta-D-ribosyl)glycinamide + L-glutamine + ATP + H2O = 2-formamido-N(1)-(5-O-phospho-beta-D-ribosyl)acetamidine + L-glutamate + ADP + phosphate + H(+). The enzyme catalyses L-glutamine + H2O = L-glutamate + NH4(+). It functions in the pathway purine metabolism; IMP biosynthesis via de novo pathway; 5-amino-1-(5-phospho-D-ribosyl)imidazole from N(2)-formyl-N(1)-(5-phospho-D-ribosyl)glycinamide: step 1/2. In terms of biological role, part of the phosphoribosylformylglycinamidine synthase complex involved in the purines biosynthetic pathway. Catalyzes the ATP-dependent conversion of formylglycinamide ribonucleotide (FGAR) and glutamine to yield formylglycinamidine ribonucleotide (FGAM) and glutamate. The FGAM synthase complex is composed of three subunits. PurQ produces an ammonia molecule by converting glutamine to glutamate. PurL transfers the ammonia molecule to FGAR to form FGAM in an ATP-dependent manner. PurS interacts with PurQ and PurL and is thought to assist in the transfer of the ammonia molecule from PurQ to PurL. The chain is Phosphoribosylformylglycinamidine synthase subunit PurQ from Moorella thermoacetica (strain ATCC 39073 / JCM 9320).